A 253-amino-acid chain; its full sequence is Imidazole glycerol phosphate synthase subunit HisF (253 aa).

Catalysis depends on residues D11 and D130.

Belongs to the HisA/HisF family. As to quaternary structure, heterodimer of HisH and HisF.

The protein resides in the cytoplasm. The catalysed reaction is 5-[(5-phospho-1-deoxy-D-ribulos-1-ylimino)methylamino]-1-(5-phospho-beta-D-ribosyl)imidazole-4-carboxamide + L-glutamine = D-erythro-1-(imidazol-4-yl)glycerol 3-phosphate + 5-amino-1-(5-phospho-beta-D-ribosyl)imidazole-4-carboxamide + L-glutamate + H(+). Its pathway is amino-acid biosynthesis; L-histidine biosynthesis; L-histidine from 5-phospho-alpha-D-ribose 1-diphosphate: step 5/9. Functionally, IGPS catalyzes the conversion of PRFAR and glutamine to IGP, AICAR and glutamate. The HisF subunit catalyzes the cyclization activity that produces IGP and AICAR from PRFAR using the ammonia provided by the HisH subunit. This is Imidazole glycerol phosphate synthase subunit HisF from Gluconobacter oxydans (strain 621H) (Gluconobacter suboxydans).